Here is a 455-residue protein sequence, read N- to C-terminus: Neuronal acetylcholine receptor subunit beta-3 (455 aa).

The N-terminal stretch at 1-20 is a signal peptide; that stretch reads MLCLMLCVLCWSRSDVAALG. The Extracellular portion of the chain corresponds to 21-229; the sequence is SVVENEDALL…VTYSFVLRRL (209 aa). N48 and N163 each carry an N-linked (GlcNAc...) asparagine glycan. Residues C150 and C164 are joined by a disulfide bond. The next 3 helical transmembrane spans lie at 230–254, 262–279, and 296–317; these read PLFY…VFYL, LSLS…LLVI, and YLLF…VINV. At 318 to 425 the chain is on the cytoplasmic side; that stretch reads HHRSSATYHP…WKFVAQVLDR (108 aa). The helical transmembrane segment at 426–444 threads the bilayer; that stretch reads IFLWLFLVVSVTGSVLIFT.

The protein belongs to the ligand-gated ion channel (TC 1.A.9) family. Acetylcholine receptor (TC 1.A.9.1) subfamily. Beta-3/CHRNB3 sub-subfamily. Neuronal AChR seems to be composed of two different type of subunits: alpha and beta. CHRNB3/beta-3 subunit is only able to form functional nAChRs when co-assembled with another beta subunit. Participates in pentameric assemblies along with CHRNA4/alpha-4 and CHRNB2/beta-2 subunits and with CHRNA6/alpha-6 as well, forming stoichiometries such as (CHRNA3:CHRNB4)2:CHRNB3, (CHRNA4:CHRNB2)2:CHRNB3 or (CHRNA6:CHRNB2)2:CHRNB3. In terms of tissue distribution, relatively abundant in the developing retina and in the trigeminal ganglion.

Its subcellular location is the synaptic cell membrane. The protein localises to the cell membrane. The catalysed reaction is Ca(2+)(in) = Ca(2+)(out). It catalyses the reaction K(+)(in) = K(+)(out). The enzyme catalyses Na(+)(in) = Na(+)(out). With respect to regulation, activated by a myriad of ligands such as acetylcholine, cytisine, nicotine, choline and epibatidine. Functionally, component of neuronal acetylcholine receptors (nAChRs) that function as pentameric, ligand-gated cation channels with high calcium permeability among other activities. nAChRs are excitatory neurotrasnmitter receptors formed by a collection of nAChR subunits known to mediate synaptic transmission in the nervous system and the neuromuscular junction. Each nAchR subunit confers differential attributes to channel properties, including activation, deactivation and desensitization kinetics, pH sensitivity, cation permeability, and binding to allosteric modulators. Has an accessory rather than functional role and is only able to form functional nAChRs when co-assembled with another beta subunit. Participates in pentameric assemblies along with CHRNA3, CHRNA4, CHRNA6, CHRNB2 and CHRNB4. Modulates receptor assembly and increases receptor sensitivity to nicotine when associated with CHRNB2, CHRNA4 and/or CHRNA6 as well as CHRNA3 and CHRNB4. Seems to play a role in nicotine addiction. The polypeptide is Neuronal acetylcholine receptor subunit beta-3 (CHRNB3) (Gallus gallus (Chicken)).